The following is a 626-amino-acid chain: Threonine--tRNA ligase (626 aa).

Positions 1-145 (MRMLLIHSDY…SRTIVPEKAV (145 aa)) are editing domain. The segment at 207–506 (PHVRLMLEQE…QEKGIKPMYP (300 aa)) is catalytic. The Zn(2+) site is built by Cys299, His351, and His475.

The protein belongs to the class-II aminoacyl-tRNA synthetase family. As to quaternary structure, homodimer. The cofactor is Zn(2+).

The protein resides in the cytoplasm. The catalysed reaction is tRNA(Thr) + L-threonine + ATP = L-threonyl-tRNA(Thr) + AMP + diphosphate + H(+). Its function is as follows. Catalyzes the attachment of threonine to tRNA(Thr) in a two-step reaction: L-threonine is first activated by ATP to form Thr-AMP and then transferred to the acceptor end of tRNA(Thr). Also edits incorrectly charged L-seryl-tRNA(Thr). The sequence is that of Threonine--tRNA ligase from Thermococcus kodakarensis (strain ATCC BAA-918 / JCM 12380 / KOD1) (Pyrococcus kodakaraensis (strain KOD1)).